We begin with the raw amino-acid sequence, 348 residues long: Heat-inducible transcription repressor HrcA (348 aa).

It belongs to the HrcA family.

Negative regulator of class I heat shock genes (grpE-dnaK-dnaJ and groELS operons). Prevents heat-shock induction of these operons. The protein is Heat-inducible transcription repressor HrcA of Ruminiclostridium cellulolyticum (strain ATCC 35319 / DSM 5812 / JCM 6584 / H10) (Clostridium cellulolyticum).